A 511-amino-acid chain; its full sequence is GATA zinc finger domain-containing protein 15 (511 aa).

Residues 1–111 are compositionally biased toward low complexity; that stretch reads TNNNNFNNIN…FNDNCNNNSN (111 aa). Disordered regions lie at residues 1–194, 214–313, and 325–355; these read TNNN…NTFF, NVNN…NENK, and NLQY…VLSP. A compositionally biased stretch (polar residues) spans 124-135; it reads SLQNINQYPLSP. Over residues 136-166 the composition is skewed to low complexity; sequence NNNKSSNQHLSHSSSNVNSQYYQTPYYQPSQ. A compositionally biased stretch (polar residues) spans 167–185; the sequence is KQNSPNSTPPLNGCQYENH. Composition is skewed to low complexity over residues 214 to 309 and 337 to 351; these read NVNN…NNDN and SGST…PTSP. The GATA-type zinc finger occupies 453–478; it reads CQACGTRASPEWRKGPDGFKSLCNAC.

The polypeptide is GATA zinc finger domain-containing protein 15 (gtaO) (Dictyostelium discoideum (Social amoeba)).